The primary structure comprises 132 residues: D-ribose pyranase (132 aa).

His-20 (proton donor) is an active-site residue. Residues Asp-28, His-99, and 121 to 123 (YSN) each bind substrate.

It belongs to the RbsD / FucU family. RbsD subfamily. In terms of assembly, homodecamer.

It is found in the cytoplasm. It carries out the reaction beta-D-ribopyranose = beta-D-ribofuranose. It functions in the pathway carbohydrate metabolism; D-ribose degradation; D-ribose 5-phosphate from beta-D-ribopyranose: step 1/2. Its function is as follows. Catalyzes the interconversion of beta-pyran and beta-furan forms of D-ribose. This is D-ribose pyranase from Streptococcus uberis (strain ATCC BAA-854 / 0140J).